Here is an 81-residue protein sequence, read N- to C-terminus: Consomatin Le1 (81 aa).

Residues 1–22 form the signal peptide; it reads MQTAYWVMVMMMVWITAPLSEG. The propeptide occupies 23–57; sequence GKPNDVIRGLVPDDLTPQLILRSLISRRRSDKDVR. Glutamate 58 carries the 4-carboxyglutamate modification. An intrachain disulfide couples cysteine 62 to cysteine 67. Tryptophan 64 is modified (D-tryptophan). Proline 69 carries the post-translational modification 4-hydroxyproline. The propeptide occupies 71-81; it reads LWRRHDLKGKD.

The protein belongs to the conotoxin C superfamily. Consomatin family. As to expression, expressed by the venom duct.

Its subcellular location is the secreted. Functionally, moderately activates human somatostatin receptors (SSTR) with a preferential activation of SSTR1 and SSTR4. In vivo, does not cause behavioral changes in mice within a few minutes of intracranial injection, but causes a progressive loss of movement thereafter. Four to five hours after injection, mice recover, even with the highest dose tested. Shows antinociception and antihyperalgesia activities in two mouse models of acute pain, most probably by acting outside the central nervous system. In Conus lenavati (Cone snail), this protein is Consomatin Le1.